A 196-amino-acid chain; its full sequence is Transcription repressor OFP10 (196 aa).

In terms of domain architecture, OVATE spans Met100–His159.

Expressed in roots, cauline leaves, shoots, stems, flower buds and siliques.

The protein localises to the nucleus. Transcriptional repressor that may regulate multiple aspects of plant growth and development through the regulation of BEL1-LIKE (BLH) and KNOX TALE (KNAT) homeodomain transcription factors. This is Transcription repressor OFP10 (OFP10) from Arabidopsis thaliana (Mouse-ear cress).